Consider the following 158-residue polypeptide: Putative zinc-binding protein ORF9 (158 aa).

Residues 72–111 form an RING-type; degenerate zinc finger; the sequence is CPVCGRAVVGPTVREACGHVTCNACETEACAVDRLCIGGG. The tract at residues 126–158 is disordered; sequence GPRWRGPRPTRPEAHEAVQRSRGSSEDACTCAP. Residues 135–150 show a composition bias toward basic and acidic residues; that stretch reads TRPEAHEAVQRSRGSS.

This is Putative zinc-binding protein ORF9 (ORF9) from Ictalurid herpesvirus 1 (strain Auburn) (IcHV-1).